The sequence spans 494 residues: Hexokinase-2 (494 aa).

Positions 32–483 constitute a Hexokinase domain; that stretch reads GRADAVLREL…SGIGAALLAA (452 aa). The interval 87–225 is hexokinase small subdomain; sequence SGEEKGVFYA…GLDMKVTALI (139 aa). ADP is bound by residues Gly101, Thr102, and Asn103. Residues Thr191, Lys192, Asn226, and Asp227 each contribute to the D-glucose site. Residues 226–472 form a hexokinase large subdomain region; sequence NDTIGTLAGG…STIVIKLAKD (247 aa). Residue Thr250 coordinates ADP. 3 residues coordinate D-glucose: Asn253, Glu281, and Glu312. Gly437 lines the ADP pocket.

Belongs to the hexokinase family. In terms of tissue distribution, expressed in roots, leaves, flowers, immature seeds, endosperm and seed coat.

The enzyme catalyses a D-hexose + ATP = a D-hexose 6-phosphate + ADP + H(+). The catalysed reaction is D-fructose + ATP = D-fructose 6-phosphate + ADP + H(+). It carries out the reaction D-glucose + ATP = D-glucose 6-phosphate + ADP + H(+). It participates in carbohydrate metabolism; hexose metabolism. The protein operates within carbohydrate degradation; glycolysis; D-glyceraldehyde 3-phosphate and glycerone phosphate from D-glucose: step 1/4. Fructose and glucose phosphorylating enzyme. The polypeptide is Hexokinase-2 (HXK2) (Oryza sativa subsp. japonica (Rice)).